The following is a 263-amino-acid chain: Endonuclease 8 (263 aa).

Pro-2 functions as the Schiff-base intermediate with DNA in the catalytic mechanism. Residue Glu-3 is the Proton donor of the active site. The active-site Proton donor; for beta-elimination activity is the Lys-53. Gln-70, Arg-125, and Asn-169 together coordinate DNA. An FPG-type zinc finger spans residues 229–263 (KVFHRDGELCERCGGIIEKTTLSSRPFYWCPGCQH). Arg-253 acts as the Proton donor; for delta-elimination activity in catalysis.

This sequence belongs to the FPG family. The cofactor is Zn(2+).

The catalysed reaction is 2'-deoxyribonucleotide-(2'-deoxyribose 5'-phosphate)-2'-deoxyribonucleotide-DNA = a 3'-end 2'-deoxyribonucleotide-(2,3-dehydro-2,3-deoxyribose 5'-phosphate)-DNA + a 5'-end 5'-phospho-2'-deoxyribonucleoside-DNA + H(+). Involved in base excision repair of DNA damaged by oxidation or by mutagenic agents. Acts as a DNA glycosylase that recognizes and removes damaged bases. Has a preference for oxidized pyrimidines, such as thymine glycol, 5,6-dihydrouracil and 5,6-dihydrothymine. Has AP (apurinic/apyrimidinic) lyase activity and introduces nicks in the DNA strand. Cleaves the DNA backbone by beta-delta elimination to generate a single-strand break at the site of the removed base with both 3'- and 5'-phosphates. In Shigella dysenteriae serotype 1 (strain Sd197), this protein is Endonuclease 8.